We begin with the raw amino-acid sequence, 281 residues long: Src-like-adapter (281 aa).

The tract at residues 1–20 is disordered; that stretch reads MGNSMKSTSPPSERPLSSSE. G2 carries N-myristoyl glycine lipidation. A compositionally biased stretch (low complexity) spans 7–20; that stretch reads STSPPSERPLSSSE. The 61-residue stretch at 22-82 folds into the SH3 domain; sequence LESDFLAVLT…PGICVARVYH (61 aa). One can recognise an SH2 domain in the interval 84-175; sequence WLFEGLGRDK…GLCCVLTTPC (92 aa). The interval 190–281 is SLA C-terminal; that stretch reads CTSPGSPVTL…FFSAPQYFED (92 aa). S258 carries the post-translational modification Phosphoserine. Y278 is modified (phosphotyrosine).

As to quaternary structure, homodimer. Interacts with phosphorylated CBL, SYK and LAT. Homodimerization and interaction with phosphorylated CBL occurs via its C-terminal domain. Interacts with PDGFRB and EPHA2. Interacts with phosphorylated proteins ZAP70; CD3Z; VAV1 and LCP2 via its SH2 domain. As to expression, predominantly expressed in lymphoid tissues. Highly expressed in spleen, thymus and lymph nodes. Weakly expressed in lung and brain. Expressed in T-cells and at low level in B-cells.

The protein localises to the cytoplasm. It is found in the endosome. In terms of biological role, adapter protein, which negatively regulates T-cell receptor (TCR) signaling. Inhibits T-cell antigen-receptor induced activation of nuclear factor of activated T-cells. Involved in the negative regulation of positive selection and mitosis of T-cells. May act by linking signaling proteins such as ZAP70 with CBL, leading to a CBL dependent degradation of signaling proteins. This chain is Src-like-adapter (Sla), found in Mus musculus (Mouse).